A 308-amino-acid chain; its full sequence is Ribosomal RNA small subunit methyltransferase H (308 aa).

Residues 36 to 38 (GGH), aspartate 55, phenylalanine 86, aspartate 103, and glutamine 110 contribute to the S-adenosyl-L-methionine site.

Belongs to the methyltransferase superfamily. RsmH family.

Its subcellular location is the cytoplasm. The enzyme catalyses cytidine(1402) in 16S rRNA + S-adenosyl-L-methionine = N(4)-methylcytidine(1402) in 16S rRNA + S-adenosyl-L-homocysteine + H(+). Functionally, specifically methylates the N4 position of cytidine in position 1402 (C1402) of 16S rRNA. The polypeptide is Ribosomal RNA small subunit methyltransferase H (Helicobacter pylori (strain P12)).